A 119-amino-acid polypeptide reads, in one-letter code: Fluoride-specific ion channel FluC (119 aa).

4 helical membrane-spanning segments follow: residues 5–25 (ILPL…LNLA), 30–50 (LSPA…IGIF), 59–79 (WKLL…GFSL), and 92–112 (SALA…WLGL). Na(+) contacts are provided by glycine 69 and threonine 72.

Belongs to the fluoride channel Fluc/FEX (TC 1.A.43) family.

It localises to the cell inner membrane. It carries out the reaction fluoride(in) = fluoride(out). With respect to regulation, na(+) is not transported, but it plays an essential structural role and its presence is essential for fluoride channel function. Functionally, fluoride-specific ion channel. Important for reducing fluoride concentration in the cell, thus reducing its toxicity. In Neisseria gonorrhoeae (strain NCCP11945), this protein is Fluoride-specific ion channel FluC.